A 344-amino-acid chain; its full sequence is Phosphoserine phosphatase (344 aa).

Residues 48 to 120 (VVTILGKDRV…ERLGLDIVMQ (73 aa)) form the ACT domain. Residue Asp135 is the Nucleophile of the active site. 2 residues coordinate Mg(2+): Asp135 and Asp137. Asp137 acts as the Proton donor in catalysis. Residues Glu144, Arg180, 223 to 224 (SG), and Lys268 contribute to the substrate site. Mg(2+) is bound at residue Asp291.

This sequence belongs to the HAD-like hydrolase superfamily. SerB family. The cofactor is Mg(2+).

The catalysed reaction is O-phospho-L-serine + H2O = L-serine + phosphate. It catalyses the reaction O-phospho-D-serine + H2O = D-serine + phosphate. It functions in the pathway amino-acid biosynthesis; L-serine biosynthesis; L-serine from 3-phospho-D-glycerate: step 3/3. This Archaeoglobus fulgidus (strain ATCC 49558 / DSM 4304 / JCM 9628 / NBRC 100126 / VC-16) protein is Phosphoserine phosphatase.